A 72-amino-acid chain; its full sequence is QVFDQACKGIYDRAIFKKLDRVCDDCYNLYRKPYVATTCRQNCYANSVFRQCLDDLLLIDVVDEYISGVQIV.

Gln1 is modified (pyrrolidone carboxylic acid). Phe3 carries the D-phenylalanine modification. 3 disulfide bridges follow: Cys7/Cys43, Cys23/Cys39, and Cys26/Cys52. Valine amide is present on Val72.

As to expression, produced by the medulla terminalis X-organ in the eyestalks and transported to the sinus gland where they are stored and released.

The protein localises to the secreted. Hormone found in the sinus gland of isopods and decapods which controls the blood sugar level. Has a secretagogue action over the amylase released from the midgut gland. May act as a stress hormone and may be involved in the control of molting and reproduction. This is Crustacean hyperglycemic hormone from Astacus astacus (Noble crayfish).